Consider the following 322-residue polypeptide: Arginase (322 aa).

Residues H113, D141, H143, and D145 each coordinate Mn(2+). Residues 143-147 (HADIN), 154-156 (SGN), and D200 each bind substrate. Residues D247 and D249 each contribute to the Mn(2+) site. 2 residues coordinate substrate: T261 and E292.

The protein belongs to the arginase family. Homotrimer. It depends on Mn(2+) as a cofactor.

It carries out the reaction L-arginine + H2O = urea + L-ornithine. Its pathway is nitrogen metabolism; urea cycle; L-ornithine and urea from L-arginine: step 1/1. The sequence is that of Arginase (ARG) from Coccidioides immitis (strain RS) (Valley fever fungus).